Consider the following 33-residue polypeptide: MNIELITQLASLILIVASGPIVIGLLSLKQGNL.

Residues 5–25 (LITQLASLILIVASGPIVIGL) form a helical membrane-spanning segment.

It belongs to the Psb30/Ycf12 family. As to quaternary structure, PSII is composed of 1 copy each of membrane proteins PsbA, PsbB, PsbC, PsbD, PsbE, PsbF, PsbH, PsbI, PsbJ, PsbK, PsbL, PsbM, PsbT, PsbX, PsbY, PsbZ, Psb30/Ycf12, peripheral proteins of the oxygen-evolving complex and a large number of cofactors. It forms dimeric complexes.

It localises to the plastid. The protein resides in the chloroplast thylakoid membrane. Functionally, a core subunit of photosystem II (PSII), probably helps stabilize the reaction center. The chain is Photosystem II reaction center protein Psb30 from Lepocinclis buetschlii.